The sequence spans 198 residues: MAEKESTKRNRREEILQALAQMLESSDGSQRITTAKLAANVGVSEAALYRHFPSKTRMFDSLIEFIEDSLTTRINLILQDEKETFNRLRLILLLILGFAERNPGLTRIMTGHALMFEQDRLQDRINQLFERIESQLRQVLREHKLRDGKGFQHDETLLASQLLAFCEGMLSRFIRSEFRYRPTQEFDTRWPLLAAQLN.

The HTH tetR-type domain maps to 9 to 70 (RNRREEILQA…SLIEFIEDSL (62 aa)). The H-T-H motif DNA-binding region spans 33–52 (TTAKLAANVGVSEAALYRHF). The stretch at 113 to 144 (ALMFEQDRLQDRINQLFERIESQLRQVLREHK) forms a coiled coil.

The protein belongs to the nucleoid occlusion factor SlmA family. Homodimer. Interacts with FtsZ.

The protein localises to the cytoplasm. The protein resides in the nucleoid. Its function is as follows. Required for nucleoid occlusion (NO) phenomenon, which prevents Z-ring formation and cell division over the nucleoid. Acts as a DNA-associated cell division inhibitor that binds simultaneously chromosomal DNA and FtsZ, and disrupts the assembly of FtsZ polymers. SlmA-DNA-binding sequences (SBS) are dispersed on non-Ter regions of the chromosome, preventing FtsZ polymerization at these regions. The protein is Nucleoid occlusion factor SlmA of Pectobacterium carotovorum subsp. carotovorum (strain PC1).